Reading from the N-terminus, the 417-residue chain is Serine hydroxymethyltransferase (417 aa).

Residues leucine 122 and 126–128 (GHL) contribute to the (6S)-5,6,7,8-tetrahydrofolate site. N6-(pyridoxal phosphate)lysine is present on lysine 231.

It belongs to the SHMT family. In terms of assembly, homodimer. Pyridoxal 5'-phosphate is required as a cofactor.

The protein resides in the cytoplasm. The enzyme catalyses (6R)-5,10-methylene-5,6,7,8-tetrahydrofolate + glycine + H2O = (6S)-5,6,7,8-tetrahydrofolate + L-serine. The protein operates within one-carbon metabolism; tetrahydrofolate interconversion. It participates in amino-acid biosynthesis; glycine biosynthesis; glycine from L-serine: step 1/1. In terms of biological role, catalyzes the reversible interconversion of serine and glycine with tetrahydrofolate (THF) serving as the one-carbon carrier. This reaction serves as the major source of one-carbon groups required for the biosynthesis of purines, thymidylate, methionine, and other important biomolecules. Also exhibits THF-independent aldolase activity toward beta-hydroxyamino acids, producing glycine and aldehydes, via a retro-aldol mechanism. This chain is Serine hydroxymethyltransferase, found in Caldicellulosiruptor saccharolyticus (strain ATCC 43494 / DSM 8903 / Tp8T 6331).